Reading from the N-terminus, the 214-residue chain is Large ribosomal subunit protein uL16 (214 aa).

The residue at position 32 (Arg32) is a Citrulline. Lys175 is covalently cross-linked (Glycyl lysine isopeptide (Lys-Gly) (interchain with G-Cter in SUMO2)). A Glycyl lysine isopeptide (Lys-Gly) (interchain with G-Cter in ubiquitin) cross-link involves residue Lys188.

This sequence belongs to the universal ribosomal protein uL16 family. Component of the large ribosomal subunit. Mature ribosomes consist of a small (40S) and a large (60S) subunit. The 40S subunit contains about 33 different proteins and 1 molecule of RNA (18S). The 60S subunit contains about 49 different proteins and 3 molecules of RNA (28S, 5.8S and 5S). Citrullinated by PADI4. In terms of processing, ufmylated by UFL1.

Its subcellular location is the cytoplasm. Component of the large ribosomal subunit. Plays a role in the formation of actively translating ribosomes. May play a role in the embryonic brain development. The chain is Large ribosomal subunit protein uL16 (RPL10) from Oryctolagus cuniculus (Rabbit).